The following is a 294-amino-acid chain: N-acetylmuramic acid 6-phosphate etherase (294 aa).

Residues 54 to 217 (VIQSFEEEGR…STASMIGVGK (164 aa)) form the SIS domain. The Proton donor role is filled by Glu82. The active site involves Glu113.

It belongs to the GCKR-like family. MurNAc-6-P etherase subfamily. As to quaternary structure, homodimer.

The enzyme catalyses N-acetyl-D-muramate 6-phosphate + H2O = N-acetyl-D-glucosamine 6-phosphate + (R)-lactate. The protein operates within amino-sugar metabolism; N-acetylmuramate degradation. Functionally, specifically catalyzes the cleavage of the D-lactyl ether substituent of MurNAc 6-phosphate, producing GlcNAc 6-phosphate and D-lactate. The polypeptide is N-acetylmuramic acid 6-phosphate etherase (Bacillus cereus (strain 03BB102)).